A 258-amino-acid chain; its full sequence is Aspartate/glutamate leucyltransferase (258 aa).

Belongs to the R-transferase family. Bpt subfamily.

The protein localises to the cytoplasm. The enzyme catalyses N-terminal L-glutamyl-[protein] + L-leucyl-tRNA(Leu) = N-terminal L-leucyl-L-glutamyl-[protein] + tRNA(Leu) + H(+). It catalyses the reaction N-terminal L-aspartyl-[protein] + L-leucyl-tRNA(Leu) = N-terminal L-leucyl-L-aspartyl-[protein] + tRNA(Leu) + H(+). Functions in the N-end rule pathway of protein degradation where it conjugates Leu from its aminoacyl-tRNA to the N-termini of proteins containing an N-terminal aspartate or glutamate. The chain is Aspartate/glutamate leucyltransferase from Rhodopseudomonas palustris (strain ATCC BAA-98 / CGA009).